The following is a 571-amino-acid chain: Glutamate--tRNA ligase (571 aa).

The 'HIGH' region motif lies at 106 to 116; the sequence is PNPDGAFHLGN.

The protein belongs to the class-I aminoacyl-tRNA synthetase family. Glutamate--tRNA ligase type 2 subfamily.

The protein localises to the cytoplasm. It carries out the reaction tRNA(Glu) + L-glutamate + ATP = L-glutamyl-tRNA(Glu) + AMP + diphosphate. Catalyzes the attachment of glutamate to tRNA(Glu) in a two-step reaction: glutamate is first activated by ATP to form Glu-AMP and then transferred to the acceptor end of tRNA(Glu). The protein is Glutamate--tRNA ligase of Pyrococcus abyssi (strain GE5 / Orsay).